We begin with the raw amino-acid sequence, 111 residues long: Vacuolar ATPase assembly integral membrane protein VMA21 (111 aa).

Residues 1-39 (MATRRIVATEKSILEKDDHIGSSPAAGEKSNITPAVPLD) are Cytoplasmic-facing. A helical transmembrane segment spans residues 40–60 (VILKLLAFTLAMVVIPIGSYF). Over 61-73 (VTVNSIFKGNSTY) the chain is Lumenal. Residues 74 to 94 (AGALAAIMANVVLVAYVVVAM) form a helical membrane-spanning segment. The Cytoplasmic portion of the chain corresponds to 95-111 (NEDQTEQEKAKEGKKDR). The Prevents secretion from ER motif lies at 108–111 (KKDR).

Belongs to the VMA21 family.

The protein localises to the endoplasmic reticulum membrane. Its subcellular location is the endoplasmic reticulum-Golgi intermediate compartment membrane. It is found in the cytoplasmic vesicle. The protein resides in the COPII-coated vesicle membrane. Its function is as follows. Required for the assembly of the V0 complex of the vacuolar ATPase (V-ATPase) in the endoplasmic reticulum. This chain is Vacuolar ATPase assembly integral membrane protein VMA21, found in Pyricularia oryzae (strain 70-15 / ATCC MYA-4617 / FGSC 8958) (Rice blast fungus).